Here is a 1236-residue protein sequence, read N- to C-terminus: ESX-4 secretion system protein EccC4 (1236 aa).

2 helical membrane-spanning segments follow: residues 32–52 (LLPV…FLPG) and 59–79 (PTFL…AVTG). FtsK domains follow at residues 407 to 607 (GTAV…SESR), 747 to 936 (RVPL…ADSE), and 1018 to 1201 (GQPV…DEGA). Residues 430–437 (GATGSGKS), 765–772 (GAPQTGKS), and 1035–1042 (GDNECGKT) contribute to the ATP site.

Part of the ESX-4 / type VII secretion system (T7SS), which is composed of cytosolic and membrane components.

Its subcellular location is the cell membrane. This Mycobacterium tuberculosis (strain ATCC 25618 / H37Rv) protein is ESX-4 secretion system protein EccC4 (eccC4).